Here is a 458-residue protein sequence, read N- to C-terminus: RuvB-like protein 1 (458 aa).

ATP is bound at residue 73–80 (GPPGTGKT).

Belongs to the RuvB family. Interacts with FRI, and with FLX and FES1, two component of the transcription activator complex FRI-C. Interacts with the disease resistance genes RPM1 and RPP5.

Its subcellular location is the nucleus. The enzyme catalyses ATP + H2O = ADP + phosphate + H(+). In terms of biological role, proposed core component of the chromatin remodeling INO80 complex which is involved in transcriptional regulation, DNA replication and probably DNA repair. Component of the NuA4 histone acetyltransferase complex which is involved in transcriptional activation of select genes principally by acetylation of nucleosomal histones H4 and H2A. Has single-stranded DNA-stimulated ATPase and ATP-dependent DNA helicase (3' to 5') activity suggesting a role in nuclear processes such as recombination and transcription. This Arabidopsis thaliana (Mouse-ear cress) protein is RuvB-like protein 1 (RIN1).